The sequence spans 696 residues: Glycine--tRNA ligase beta subunit (696 aa).

Belongs to the class-II aminoacyl-tRNA synthetase family. As to quaternary structure, tetramer of two alpha and two beta subunits.

It is found in the cytoplasm. The enzyme catalyses tRNA(Gly) + glycine + ATP = glycyl-tRNA(Gly) + AMP + diphosphate. This chain is Glycine--tRNA ligase beta subunit, found in Aromatoleum aromaticum (strain DSM 19018 / LMG 30748 / EbN1) (Azoarcus sp. (strain EbN1)).